The primary structure comprises 243 residues: ATP-dependent dethiobiotin synthetase BioD (243 aa).

Position 12 to 17 (Asp-12 to Leu-17) interacts with ATP. Thr-16 contributes to the Mg(2+) binding site. Residue Lys-37 is part of the active site. A substrate-binding site is contributed by Ser-41. ATP-binding positions include Asp-54, Glu-115–Gly-118, and Asn-179–Met-180. Asp-54 and Glu-115 together coordinate Mg(2+).

The protein belongs to the dethiobiotin synthetase family. In terms of assembly, homodimer. Requires Mg(2+) as cofactor.

It is found in the cytoplasm. The catalysed reaction is (7R,8S)-7,8-diammoniononanoate + CO2 + ATP = (4R,5S)-dethiobiotin + ADP + phosphate + 3 H(+). Its pathway is cofactor biosynthesis; biotin biosynthesis; biotin from 7,8-diaminononanoate: step 1/2. Functionally, catalyzes a mechanistically unusual reaction, the ATP-dependent insertion of CO2 between the N7 and N8 nitrogen atoms of 7,8-diaminopelargonic acid (DAPA, also called 7,8-diammoniononanoate) to form a ureido ring. The polypeptide is ATP-dependent dethiobiotin synthetase BioD (Caldicellulosiruptor saccharolyticus (strain ATCC 43494 / DSM 8903 / Tp8T 6331)).